The following is a 620-amino-acid chain: Chaperone protein HscA homolog (620 aa).

Belongs to the heat shock protein 70 family.

Its function is as follows. Chaperone involved in the maturation of iron-sulfur cluster-containing proteins. Has a low intrinsic ATPase activity which is markedly stimulated by HscB. The sequence is that of Chaperone protein HscA homolog from Shewanella piezotolerans (strain WP3 / JCM 13877).